The following is an 863-amino-acid chain: Leucine--tRNA ligase (863 aa).

The 'HIGH' region motif lies at 41–51; it reads PYPSGRIHIGH. Residues 627-631 carry the 'KMSKS' region motif; that stretch reads KMSKS. Residue Lys630 coordinates ATP.

The protein belongs to the class-I aminoacyl-tRNA synthetase family.

It localises to the cytoplasm. It carries out the reaction tRNA(Leu) + L-leucine + ATP = L-leucyl-tRNA(Leu) + AMP + diphosphate. In Jannaschia sp. (strain CCS1), this protein is Leucine--tRNA ligase.